We begin with the raw amino-acid sequence, 82 residues long: Sec-independent protein translocase protein TatA (82 aa).

The chain crosses the membrane as a helical span at residues 1 to 21 (MGSFSIWHWLIVLLIVVMVFG). Residues 46–82 (GASTDDSATTSAPAGQVTNNSTAADKTTIDVEAKHKS) form a disordered region. A compositionally biased stretch (polar residues) spans 49–70 (TDDSATTSAPAGQVTNNSTAAD). Residues 72–82 (TTIDVEAKHKS) show a composition bias toward basic and acidic residues.

The protein belongs to the TatA/E family. The Tat system comprises two distinct complexes: a TatABC complex, containing multiple copies of TatA, TatB and TatC subunits, and a separate TatA complex, containing only TatA subunits. Substrates initially bind to the TatABC complex, which probably triggers association of the separate TatA complex to form the active translocon.

It localises to the cell inner membrane. In terms of biological role, part of the twin-arginine translocation (Tat) system that transports large folded proteins containing a characteristic twin-arginine motif in their signal peptide across membranes. TatA could form the protein-conducting channel of the Tat system. The chain is Sec-independent protein translocase protein TatA from Acidovorax sp. (strain JS42).